A 182-amino-acid polypeptide reads, in one-letter code: Large ribosomal subunit protein uL5 (182 aa).

Belongs to the universal ribosomal protein uL5 family. As to quaternary structure, part of the 50S ribosomal subunit; part of the 5S rRNA/L5/L18/L25 subcomplex. Contacts the 5S rRNA and the P site tRNA. Forms a bridge to the 30S subunit in the 70S ribosome.

Functionally, this is one of the proteins that bind and probably mediate the attachment of the 5S RNA into the large ribosomal subunit, where it forms part of the central protuberance. In the 70S ribosome it contacts protein S13 of the 30S subunit (bridge B1b), connecting the 2 subunits; this bridge is implicated in subunit movement. Contacts the P site tRNA; the 5S rRNA and some of its associated proteins might help stabilize positioning of ribosome-bound tRNAs. The chain is Large ribosomal subunit protein uL5 from Borrelia garinii subsp. bavariensis (strain ATCC BAA-2496 / DSM 23469 / PBi) (Borreliella bavariensis).